Consider the following 388-residue polypeptide: Integrase (388 aa).

One can recognise a Core-binding (CB) domain in the interval 70–151; the sequence is YTVADAVNDW…CLNRAVKRAM (82 aa). Residues 173 to 379 form the Tyr recombinase domain; sequence RPSKALTFAQ…VIQTGAVVMD (207 aa). Catalysis depends on residues R208, K249, R330, and H353. Catalysis depends on Y363, which acts as the O-(3'-phospho-DNA)-tyrosine intermediate.

This sequence belongs to the 'phage' integrase family.

Functionally, required for integration of pSAM2. The protein is Integrase (int) of Streptomyces ambofaciens.